Here is a 188-residue protein sequence, read N- to C-terminus: Dual specificity protein phosphatase 18 (188 aa).

In terms of domain architecture, Tyrosine-protein phosphatase spans 19-160 (GLSQITKSLY…LIHYEFQLFG (142 aa)). Residues 95–141 (MKQGRTLLHCAAGVSRSAALCLAYLMKYHAMSLLDAHTWTKSCRPII) are sufficient for mitochondrial localization. The Phosphocysteine intermediate role is filled by cysteine 104.

This sequence belongs to the protein-tyrosine phosphatase family. Non-receptor class dual specificity subfamily.

It is found in the cytoplasm. The protein localises to the nucleus. The protein resides in the mitochondrion inner membrane. The catalysed reaction is O-phospho-L-tyrosyl-[protein] + H2O = L-tyrosyl-[protein] + phosphate. It carries out the reaction O-phospho-L-seryl-[protein] + H2O = L-seryl-[protein] + phosphate. The enzyme catalyses O-phospho-L-threonyl-[protein] + H2O = L-threonyl-[protein] + phosphate. Its function is as follows. Can dephosphorylate single and diphosphorylated synthetic MAPK peptides, with preference for the phosphotyrosine and diphosphorylated forms over phosphothreonine. In vitro, dephosphorylates p-nitrophenyl phosphate (pNPP). The chain is Dual specificity protein phosphatase 18 (DUSP18) from Pongo abelii (Sumatran orangutan).